The chain runs to 517 residues: Acyltransferase AFT15-1 (517 aa).

Residue H180 is the Proton acceptor of the active site.

This sequence belongs to the plant acyltransferase family.

Its pathway is mycotoxin biosynthesis. Functionally, acyltransferase; part of the gene clusters that mediate the biosynthesis of the host-selective toxins (HSTs) AF-toxins responsible for Alternaria black spot of strawberry disease by the strawberry pathotype. AF-toxin I and III are valine derivatives of 2,3-dyhydroxy-isovaleric acid and 2-hydroxy-isovaleric acid respectively, while AF II is an isoleucine derivative of 2-hydroxy-valeric acid. These derivatives are bound to a 9,10-epoxy-8-hydroxy-9-methyl-decatrienoic acid (EDA) moiety. On cellular level, AF-toxins affect plasma membrane of susceptible cells and cause a sudden increase in loss of K(+) after a few minutes of toxin treatment. The aldo-keto reductase AFTS1 catalyzes the conversion of 2-keto-isovaleric acid (2-KIV) to 2-hydroxy-isovaleric acid (2-HIV) by reduction of its ketone to an alcohol. The acyl-CoA ligase AFT1, the hydrolase AFT2 and the enoyl-CoA hydratases AFT3 and AFT6, but also the polyketide synthase AFT9, the acyl-CoA dehydrogenase AFT10, the cytochrome P450 monooxygenase AFT11 and the oxidoreductase AFT12 are all involved in the biosynthesis of the AK-, AF- and ACT-toxin common EDA structural moiety. The exact function of each enzyme, and of additional enzymes identified within the AF-toxin clusters have still to be determined. The chain is Acyltransferase AFT15-1 (AFT15-1) from Alternaria alternata (Alternaria rot fungus).